The chain runs to 273 residues: 4-hydroxy-tetrahydrodipicolinate reductase (273 aa).

NAD(+) is bound by residues 12-17 (GAGGRM) and glutamate 38. Arginine 39 is an NADP(+) binding site. NAD(+) is bound by residues 102 to 104 (GTT) and 126 to 129 (AANF). Histidine 159 (proton donor/acceptor) is an active-site residue. Position 160 (histidine 160) interacts with (S)-2,3,4,5-tetrahydrodipicolinate. The active-site Proton donor is lysine 163. 169 to 170 (GT) contacts (S)-2,3,4,5-tetrahydrodipicolinate.

This sequence belongs to the DapB family. As to quaternary structure, homotetramer.

It is found in the cytoplasm. The enzyme catalyses (S)-2,3,4,5-tetrahydrodipicolinate + NAD(+) + H2O = (2S,4S)-4-hydroxy-2,3,4,5-tetrahydrodipicolinate + NADH + H(+). It catalyses the reaction (S)-2,3,4,5-tetrahydrodipicolinate + NADP(+) + H2O = (2S,4S)-4-hydroxy-2,3,4,5-tetrahydrodipicolinate + NADPH + H(+). Its pathway is amino-acid biosynthesis; L-lysine biosynthesis via DAP pathway; (S)-tetrahydrodipicolinate from L-aspartate: step 4/4. Its function is as follows. Catalyzes the conversion of 4-hydroxy-tetrahydrodipicolinate (HTPA) to tetrahydrodipicolinate. In Klebsiella pneumoniae (strain 342), this protein is 4-hydroxy-tetrahydrodipicolinate reductase.